The primary structure comprises 1801 residues: U3 small nucleolar RNA-associated protein 10 (1801 aa).

Helical transmembrane passes span 102–122 (LALVGGRLLLSPAVKAVEWLI) and 136–156 (ILTFLPYYSTPVFLNLLAILP). An HEAT 1 repeat occupies 581 to 619 (DVDVQALLPFMLIALADPSERVRSGAVDALANIGKVVDK). Helical transmembrane passes span 939 to 959 (IQSGMSYLLSLTLGSLLAIVN) and 995 to 1015 (ALLLVAGLSVIAPELVLHSVM). HEAT repeat units follow at residues 1038-1076 (DQTIDQVVPALIQSLRHQKRDVVSGTSELLLSFTAAFEH), 1110-1148 (YSMDKAVLVLMTGLVSDADATVELSTYSKFLNLVGDSLK), 1244-1282 (TLTTIDFLDTIEALLKRPDDALRRKVLSLLATRLQQSPE), 1288-1327 (QTRMLDFLTVLVDIVQSSPDILLKHAAVTCIDRITEKYGK), and 1756-1794 (LALLPEMLPYISELMEDEDEGVEREVRKWVKQIEGVLGE).

The protein belongs to the HEATR1/UTP10 family. As to quaternary structure, component of the ribosomal small subunit (SSU) processome.

The protein localises to the nucleus. It localises to the nucleolus. It is found in the membrane. Involved in nucleolar processing of pre-18S ribosomal RNA. Involved in ribosome biosynthesis. The sequence is that of U3 small nucleolar RNA-associated protein 10 from Emericella nidulans (strain FGSC A4 / ATCC 38163 / CBS 112.46 / NRRL 194 / M139) (Aspergillus nidulans).